Reading from the N-terminus, the 459-residue chain is Cysteine--tRNA ligase (459 aa).

Residue Cys-28 coordinates Zn(2+). Residues 30 to 40 carry the 'HIGH' region motif; that stretch reads ITIYDLCHIGH. Residues Cys-209, His-234, and Glu-238 each coordinate Zn(2+). The 'KMSKS' region signature appears at 266-270; sequence KMSKS. Lys-269 contacts ATP.

The protein belongs to the class-I aminoacyl-tRNA synthetase family. Monomer. Zn(2+) is required as a cofactor.

The protein localises to the cytoplasm. The enzyme catalyses tRNA(Cys) + L-cysteine + ATP = L-cysteinyl-tRNA(Cys) + AMP + diphosphate. This is Cysteine--tRNA ligase from Shewanella sediminis (strain HAW-EB3).